We begin with the raw amino-acid sequence, 399 residues long: Type II secretion system protein L (399 aa).

Residues 1-247 (MSKAENTSGK…VKPWKQALLP (247 aa)) lie on the Cytoplasmic side of the membrane. A helical membrane pass occupies residues 248-264 (WRNVLIALSAWLLLVLG). The Periplasmic segment spans residues 265–399 (ESVWTHYQWY…EGQLTLRSQP (135 aa)).

The protein belongs to the GSP L family. Type II secretion system is composed of four main components: the outer membrane complex, the inner membrane complex, the cytoplasmic secretion ATPase and the periplasm-spanning pseudopilus. Forms homodimers. Interacts with OutM/GspM. Interacts with OutE/GspE and OutF/GspF.

It is found in the cell inner membrane. In terms of biological role, inner membrane component of the type II secretion system required for the energy-dependent secretion of extracellular factors such as proteases and toxins from the periplasm. Plays a role in the complex assembly and recruits OutM resulting in a stable complex in the inner membrane. Provides thus a link between the energy-providing OutE protein in the cytoplasm and the rest of the T2SS machinery. The protein is Type II secretion system protein L (outL) of Dickeya chrysanthemi (Pectobacterium chrysanthemi).